The primary structure comprises 380 residues: Cytochrome b (380 aa).

4 helical membrane-spanning segments follow: residues 34 to 54 (FGSLLGICLTTQILTGLLLAA), 78 to 99 (WLIRNLHANGASFFFICIYMHI), 114 to 134 (WNTGVILLLTLMATAFVGYVL), and 179 to 199 (FFTLHFLLPFMIMGLTLIHLT). His-84 and His-98 together coordinate heme b. Residues His-183 and His-197 each contribute to the heme b site. His-202 is an a ubiquinone binding site. 4 consecutive transmembrane segments (helical) span residues 227 to 247 (LKDTLGFMLMFLPLMTLALFS), 289 to 309 (LGGVLALAASMLILFLAPLLH), 321 to 341 (LSQLLFWTLTANLLILTWVGS), and 348 to 368 (FIIIGQLASLTYFTILLILFP).

Belongs to the cytochrome b family. As to quaternary structure, the cytochrome bc1 complex contains 11 subunits: 3 respiratory subunits (MT-CYB, CYC1 and UQCRFS1), 2 core proteins (UQCRC1 and UQCRC2) and 6 low-molecular weight proteins (UQCRH/QCR6, UQCRB/QCR7, UQCRQ/QCR8, UQCR10/QCR9, UQCR11/QCR10 and a cleavage product of UQCRFS1). This cytochrome bc1 complex then forms a dimer. Heme b serves as cofactor.

The protein localises to the mitochondrion inner membrane. In terms of biological role, component of the ubiquinol-cytochrome c reductase complex (complex III or cytochrome b-c1 complex) that is part of the mitochondrial respiratory chain. The b-c1 complex mediates electron transfer from ubiquinol to cytochrome c. Contributes to the generation of a proton gradient across the mitochondrial membrane that is then used for ATP synthesis. The sequence is that of Cytochrome b (MT-CYB) from Balearica regulorum (Grey crowned-crane).